Here is a 278-residue protein sequence, read N- to C-terminus: Mediator of RNA polymerase II transcription subunit 4 (278 aa).

Residues 57–88 (HARILTLRAQVEALEEQKKSSVTALATLRHEL) are a coiled coil. 2 disordered regions span residues 120-181 (VPPT…EEEE) and 240-278 (VEAPPEPEPVAEPVQAQAPRPARPAQPQATFDMFDDLDD). Basic and acidic residues-rich tracts occupy residues 124 to 142 (YRERAPEAASDKDRDKDDA) and 160 to 172 (DAPKDRDNADNKP). Positions 250 to 268 (AEPVQAQAPRPARPAQPQA) are enriched in low complexity.

This sequence belongs to the Mediator complex subunit 4 family. In terms of assembly, component of the Mediator complex.

The protein localises to the nucleus. Functionally, component of the Mediator complex, a coactivator involved in the regulated transcription of nearly all RNA polymerase II-dependent genes. Mediator functions as a bridge to convey information from gene-specific regulatory proteins to the basal RNA polymerase II transcription machinery. Mediator is recruited to promoters by direct interactions with regulatory proteins and serves as a scaffold for the assembly of a functional preinitiation complex with RNA polymerase II and the general transcription factors. The chain is Mediator of RNA polymerase II transcription subunit 4 (MED4) from Phaeosphaeria nodorum (strain SN15 / ATCC MYA-4574 / FGSC 10173) (Glume blotch fungus).